Reading from the N-terminus, the 509-residue chain is Histidine ammonia-lyase (509 aa).

The segment at residues 142–144 (ASG) is a cross-link (5-imidazolinone (Ala-Gly)). A 2,3-didehydroalanine (Ser) modification is found at Ser143.

This sequence belongs to the PAL/histidase family. Contains an active site 4-methylidene-imidazol-5-one (MIO), which is formed autocatalytically by cyclization and dehydration of residues Ala-Ser-Gly.

The protein resides in the cytoplasm. The enzyme catalyses L-histidine = trans-urocanate + NH4(+). Its pathway is amino-acid degradation; L-histidine degradation into L-glutamate; N-formimidoyl-L-glutamate from L-histidine: step 1/3. The protein is Histidine ammonia-lyase of Sphingopyxis alaskensis (strain DSM 13593 / LMG 18877 / RB2256) (Sphingomonas alaskensis).